An 85-amino-acid chain; its full sequence is Hepcidin (85 aa).

A signal peptide spans 1 to 24 (MKTFSVAVAVAVVLAFICLQESSA). Residues 25–64 (VPANEEQELEQQIYFADPEMPVESCKMPYYMRENRQGSPA) constitute a propeptide that is removed on maturation. 4 cysteine pairs are disulfide-bonded: C66–C83, C69–C72, C70–C79, and C73–C82.

Monomer. In terms of tissue distribution, expressed in all tissues tested, with highest levels of expression in kidney and lowest levels in liver. Intra-peritoneal injection of lipopolysaccharide results in increased expression in heart, spleen and stomach, but not in kidney or liver.

The protein localises to the secreted. In terms of biological role, seems to act as a signaling molecule involved in the maintenance of iron homeostasis. Seems to be required in conjunction with HFE to regulate both intestinal iron absorption and iron storage in macrophages. Has very strong antibacterial activity against the marine Gram-negative bacteria V.alginolyticus (MIC=24 uM), V.fluvialis, V.harveyis (MIC=12 uM) and V.parahaemolyticus (MIC=6 uM). Has antibacterial activity against the Gram-negative bacteria A.hydrophila (MIC=6 uM), E.coli (MIC=24 uM), and E.coli BL21(DE3)plysS (MIC=6 uM), and the Gram-positive bacteria B.cereus (MIC=24 uM), B.subtilis (MIC=6 uM), C.glutamicum (MIC=3 uM), M.luteus (MIC=3 uM), M.lysodeikticus, S.aureus (MIC=6 uM) and S.epidermis (MIC=12 uM). Possesses antifungal activity against A.niger (MIC=24 uM), F.graminearum (MIC24 uM) and F.solani (MIC=24 uM), but lacks antifungal activity against the yeasts P.pastoris GS115 and C.albicans. This Larimichthys crocea (Large yellow croaker) protein is Hepcidin.